Reading from the N-terminus, the 271-residue chain is Neurexophilin-1 (271 aa).

Residues 1–21 (MQAACWYVLLLLQPTVYLVTC) form the signal peptide. Residues 22–97 (ANLTNGGKSE…WDWLRNSTDL (76 aa)) form an II region. N-linked (GlcNAc...) asparagine glycosylation is found at asparagine 23, asparagine 68, asparagine 93, asparagine 146, asparagine 156, and asparagine 162. An III region spans residues 98–176 (QEPRPRAKRR…LVPPTKIVEF (79 aa)). The segment at 177–185 (DLAQQTVID) is IV (linker domain). Residues 186 to 271 (AKDSKSFNCR…HSDTPYFPSG (86 aa)) are v (Cys-rich).

The protein belongs to the neurexophilin family. In terms of processing, may be proteolytically processed at the boundary between the N-terminal non-conserved and the central conserved domain in neuron-like cells. Brain, only in a scattered subpopulation of neurons that probably represent inhibitory interneurons.

It localises to the secreted. May be signaling molecules that resemble neuropeptides. Ligand for alpha-neurexins. The sequence is that of Neurexophilin-1 (Nxph1) from Mus musculus (Mouse).